The primary structure comprises 522 residues: F-box-like/WD repeat-containing protein TBL1Y (522 aa).

Residue Ser-2 is modified to N-acetylserine. A LisH domain is found at 4-36 (TSDEVNFLVYRYLQESGFSHSAFTFGIESHISQ). The 46-residue stretch at 41-86 (GTLVPPSALISILQKGLQYVEAEISINKDGTVFDSRPIESLSLIVA) folds into the F-box-like domain. Lys-102 carries the post-translational modification N6-acetyllysine. Phosphoserine is present on Ser-130. 8 WD repeats span residues 177–216 (GHES…NGGS), 233–272 (PSNK…ASTL), 274–313 (QHKG…AKQQ), 316–354 (FHSA…PVKT), 357–396 (GHTN…CVHD), 399–447 (AHSK…CTHT), 450–489 (KHQE…LVHS), and 491–521 (QGTG…CVLD). A Glycyl lysine isopeptide (Lys-Gly) (interchain with G-Cter in SUMO2) cross-link involves residue Lys-287.

It belongs to the WD repeat EBI family. As to quaternary structure, probable component of the N-Cor repressor complex and some E3 ubiquitin ligase complex. Interacts with NCOR2. As to expression, fetal brain and prostate. Expressed in the cochlear spiral ganglion neurons, and in outer and inner hair cells.

It is found in the nucleus. Functionally, F-box-like protein involved in the recruitment of the ubiquitin/19S proteasome complex to nuclear receptor-regulated transcription units. Plays an essential role in transcription activation mediated by nuclear receptors. Probably acts as integral component of corepressor complexes that mediates the recruitment of the 19S proteasome complex, leading to the subsequent proteasomal degradation of transcription repressor complexes, thereby allowing cofactor exchange. This Homo sapiens (Human) protein is F-box-like/WD repeat-containing protein TBL1Y (TBL1Y).